The primary structure comprises 161 residues: uncharacterized protein (161 aa).

The chain crosses the membrane as a helical span at residues 30–50 (GVILFRLLGVILFRLLGVILF).

It is found in the membrane. This is an uncharacterized protein from Homo sapiens (Human).